We begin with the raw amino-acid sequence, 184 residues long: Transmembrane protein 140 (184 aa).

At 1-12 (MAISRVWRNRLS) the chain is on the cytoplasmic side. A helical transmembrane segment spans residues 13 to 33 (FMAIMILVAMVLSLMSYALLW). At 34–83 (KAGNLTDVPNLRIGFYNFCLWKEDIGSLECYNFPELGVLGIPQVGLALAR) the chain is on the extracellular side. Asn-37 is a glycosylation site (N-linked (GlcNAc...) asparagine). The chain crosses the membrane as a helical span at residues 84 to 104 (LGVYGALVLAVFVPLPLLLAQ). Over 105-117 (CNSDEGEWRLAVG) the chain is Cytoplasmic. Residues 118 to 138 (FLGASSVLLAGGLSLFLFLVW) traverse the membrane as a helical segment. Residues 139–149 (KWLRLSFLGPG) lie on the Extracellular side of the membrane. The chain crosses the membrane as a helical span at residues 150–170 (FLSLCLAQALLIILLMAMVMF). The Cytoplasmic portion of the chain corresponds to 171–184 (PPRDKKDKNHWENC).

The protein localises to the membrane. In Rattus norvegicus (Rat), this protein is Transmembrane protein 140 (Tmem140).